Reading from the N-terminus, the 58-residue chain is Alpha-conotoxin-like Pu1.6 (58 aa).

Positions 1-17 are cleaved as a signal peptide; it reads MFTVFLLVVLVTTVVFS. Positions 18–35 are excised as a propeptide; the sequence is TSDHRPASNHENRRASKR. 2 disulfides stabilise this stretch: cysteine 44-cysteine 50 and cysteine 45-cysteine 58. Residues 46–48 form a lacks the Ser-Xaa-Pro motif that is crucial for potent interaction with nAChR region; it reads TNP.

It belongs to the conotoxin A superfamily. In terms of tissue distribution, expressed by the venom duct.

It localises to the secreted. Alpha-conotoxins act on postsynaptic membranes, they bind to the nicotinic acetylcholine receptors (nAChR) and thus inhibit them. Has possibly a distinct nAChR binding mode from other alpha-conotoxins, due to a different three residue motif (lacks the Ser-Xaa-Pro motif). The protein is Alpha-conotoxin-like Pu1.6 of Conus pulicarius (Flea-bitten cone).